Consider the following 141-residue polypeptide: Lysozyme P (141 aa).

The N-terminal stretch at 1-18 (MKAFLVICALTLTAVATQ) is a signal peptide. A C-type lysozyme domain is found at 20–141 (RTMDRCSLAR…GSLPSINSCF (122 aa)). Disulfide bonds link cysteine 25/cysteine 140, cysteine 46/cysteine 130, cysteine 81/cysteine 97, and cysteine 93/cysteine 111. Residues glutamate 51 and aspartate 69 contribute to the active site.

The protein belongs to the glycosyl hydrolase 22 family. Salivary gland.

The enzyme catalyses Hydrolysis of (1-&gt;4)-beta-linkages between N-acetylmuramic acid and N-acetyl-D-glucosamine residues in a peptidoglycan and between N-acetyl-D-glucosamine residues in chitodextrins.. In terms of biological role, unlikely to play an active role in the humoral immune defense. May have a function in the digestion of bacteria in the food. This Drosophila melanogaster (Fruit fly) protein is Lysozyme P (LysP).